A 775-amino-acid chain; its full sequence is Aconitate hydratase, mitochondrial (775 aa).

The N-terminal 25 residues, 1 to 25 (MLTTLARASAMLLGARGFASAADLD), are a transit peptide targeting the mitochondrion. Substrate is bound by residues Gln95 and 188-190 (DSH). Asn337 carries an N-linked (GlcNAc...) asparagine glycan. Position 381 (Cys381) interacts with [4Fe-4S] cluster. N-linked (GlcNAc...) asparagine glycosylation occurs at Asn383. Positions 444 and 447 each coordinate [4Fe-4S] cluster. Substrate is bound at residue Arg470. Residue Asn471 is glycosylated (N-linked (GlcNAc...) asparagine). Substrate is bound by residues Arg475 and Arg603. A glycan (N-linked (GlcNAc...) asparagine) is linked at Asn608. Substrate is bound at residue 666-667 (SR). N-linked (GlcNAc...) asparagine glycans are attached at residues Asn754 and Asn763.

The protein belongs to the aconitase/IPM isomerase family. Monomer. Requires [4Fe-4S] cluster as cofactor.

The protein localises to the mitochondrion. The enzyme catalyses citrate = D-threo-isocitrate. It participates in carbohydrate metabolism; tricarboxylic acid cycle; isocitrate from oxaloacetate: step 2/2. Its function is as follows. Catalyzes the isomerization of citrate to isocitrate via cis-aconitate. This is Aconitate hydratase, mitochondrial from Arthroderma benhamiae (strain ATCC MYA-4681 / CBS 112371) (Trichophyton mentagrophytes).